The primary structure comprises 313 residues: tRNA pseudouridine synthase B (313 aa).

The active-site Nucleophile is the aspartate 48.

The protein belongs to the pseudouridine synthase TruB family. Type 1 subfamily.

It carries out the reaction uridine(55) in tRNA = pseudouridine(55) in tRNA. Functionally, responsible for synthesis of pseudouridine from uracil-55 in the psi GC loop of transfer RNAs. This is tRNA pseudouridine synthase B from Saccharophagus degradans (strain 2-40 / ATCC 43961 / DSM 17024).